The chain runs to 192 residues: Phosphoheptose isomerase (192 aa).

An SIS domain is found at 37 to 192 (LADSFKQEGK…IQLVEKEMAK (156 aa)). Residue 52–54 (NGG) participates in substrate binding. The Zn(2+) site is built by H61 and E65. Substrate contacts are provided by residues E65, 93–94 (ND), 119–121 (STS), S124, and Q172. The Zn(2+) site is built by Q172 and H180.

This sequence belongs to the SIS family. GmhA subfamily. As to quaternary structure, homotetramer. Zn(2+) serves as cofactor.

The protein resides in the cytoplasm. The enzyme catalyses 2 D-sedoheptulose 7-phosphate = D-glycero-alpha-D-manno-heptose 7-phosphate + D-glycero-beta-D-manno-heptose 7-phosphate. It participates in carbohydrate biosynthesis; D-glycero-D-manno-heptose 7-phosphate biosynthesis; D-glycero-alpha-D-manno-heptose 7-phosphate and D-glycero-beta-D-manno-heptose 7-phosphate from sedoheptulose 7-phosphate: step 1/1. Functionally, catalyzes the isomerization of sedoheptulose 7-phosphate in D-glycero-D-manno-heptose 7-phosphate. This is Phosphoheptose isomerase from Aeromonas hydrophila subsp. hydrophila (strain ATCC 7966 / DSM 30187 / BCRC 13018 / CCUG 14551 / JCM 1027 / KCTC 2358 / NCIMB 9240 / NCTC 8049).